Consider the following 477-residue polypeptide: Membrane-bound lytic murein transglycosylase F (477 aa).

Positions 1 to 22 (MTRFLLIIILGFLLTACQQVTV) are cleaved as a signal peptide. Residues 23–257 (DEPEFVPHQL…HLNEKYFGHV (235 aa)) are non-LT domain. An LT domain region spans residues 258–477 (KRFDYIDTRA…AGSLSPDQPK (220 aa)). Glu302 is a catalytic residue. The tract at residues 446-477 (SKQPMPEDEQNDLIAEELPSMPAGSLSPDQPK) is disordered. Acidic residues predominate over residues 451–460 (PEDEQNDLIA).

This sequence in the N-terminal section; belongs to the bacterial solute-binding protein 3 family. It in the C-terminal section; belongs to the transglycosylase Slt family.

The protein resides in the cell outer membrane. The catalysed reaction is Exolytic cleavage of the (1-&gt;4)-beta-glycosidic linkage between N-acetylmuramic acid (MurNAc) and N-acetylglucosamine (GlcNAc) residues in peptidoglycan, from either the reducing or the non-reducing ends of the peptidoglycan chains, with concomitant formation of a 1,6-anhydrobond in the MurNAc residue.. Its function is as follows. Murein-degrading enzyme that degrades murein glycan strands and insoluble, high-molecular weight murein sacculi, with the concomitant formation of a 1,6-anhydromuramoyl product. Lytic transglycosylases (LTs) play an integral role in the metabolism of the peptidoglycan (PG) sacculus. Their lytic action creates space within the PG sacculus to allow for its expansion as well as for the insertion of various structures such as secretion systems and flagella. This Shewanella sp. (strain W3-18-1) protein is Membrane-bound lytic murein transglycosylase F.